A 385-amino-acid polypeptide reads, in one-letter code: UDP-N-acetylglucosamine--N-acetylmuramyl-(pentapeptide) pyrophosphoryl-undecaprenol N-acetylglucosamine transferase (385 aa).

Residues 11–13 (TGG), Asn117, Arg160, Ser215, and Gln317 each bind UDP-N-acetyl-alpha-D-glucosamine.

Belongs to the glycosyltransferase 28 family. MurG subfamily.

The protein resides in the cell inner membrane. It carries out the reaction di-trans,octa-cis-undecaprenyl diphospho-N-acetyl-alpha-D-muramoyl-L-alanyl-D-glutamyl-meso-2,6-diaminopimeloyl-D-alanyl-D-alanine + UDP-N-acetyl-alpha-D-glucosamine = di-trans,octa-cis-undecaprenyl diphospho-[N-acetyl-alpha-D-glucosaminyl-(1-&gt;4)]-N-acetyl-alpha-D-muramoyl-L-alanyl-D-glutamyl-meso-2,6-diaminopimeloyl-D-alanyl-D-alanine + UDP + H(+). It participates in cell wall biogenesis; peptidoglycan biosynthesis. Cell wall formation. Catalyzes the transfer of a GlcNAc subunit on undecaprenyl-pyrophosphoryl-MurNAc-pentapeptide (lipid intermediate I) to form undecaprenyl-pyrophosphoryl-MurNAc-(pentapeptide)GlcNAc (lipid intermediate II). The sequence is that of UDP-N-acetylglucosamine--N-acetylmuramyl-(pentapeptide) pyrophosphoryl-undecaprenol N-acetylglucosamine transferase from Rickettsia typhi (strain ATCC VR-144 / Wilmington).